The following is a 277-amino-acid chain: Ribosomal RNA small subunit methyltransferase A (277 aa).

6 residues coordinate S-adenosyl-L-methionine: asparagine 20, leucine 22, glycine 47, glutamate 68, aspartate 93, and asparagine 114.

This sequence belongs to the class I-like SAM-binding methyltransferase superfamily. rRNA adenine N(6)-methyltransferase family. RsmA subfamily.

The protein resides in the cytoplasm. The enzyme catalyses adenosine(1518)/adenosine(1519) in 16S rRNA + 4 S-adenosyl-L-methionine = N(6)-dimethyladenosine(1518)/N(6)-dimethyladenosine(1519) in 16S rRNA + 4 S-adenosyl-L-homocysteine + 4 H(+). In terms of biological role, specifically dimethylates two adjacent adenosines (A1518 and A1519) in the loop of a conserved hairpin near the 3'-end of 16S rRNA in the 30S particle. May play a critical role in biogenesis of 30S subunits. The protein is Ribosomal RNA small subunit methyltransferase A of Aliivibrio salmonicida (strain LFI1238) (Vibrio salmonicida (strain LFI1238)).